The sequence spans 103 residues: Co-chaperonin GroES (103 aa).

This sequence belongs to the GroES chaperonin family. Heptamer of 7 subunits arranged in a ring. Interacts with the chaperonin GroEL.

It is found in the cytoplasm. Its function is as follows. Together with the chaperonin GroEL, plays an essential role in assisting protein folding. The GroEL-GroES system forms a nano-cage that allows encapsulation of the non-native substrate proteins and provides a physical environment optimized to promote and accelerate protein folding. GroES binds to the apical surface of the GroEL ring, thereby capping the opening of the GroEL channel. The sequence is that of Co-chaperonin GroES from Prochlorococcus marinus (strain MIT 9313).